The primary structure comprises 231 residues: Small ribosomal subunit protein uS3 (231 aa).

The region spanning 39–107 (IRKFLKAKLY…DVTINIKEER (69 aa)) is the KH type-2 domain.

Belongs to the universal ribosomal protein uS3 family. In terms of assembly, part of the 30S ribosomal subunit. Forms a tight complex with proteins S10 and S14.

Functionally, binds the lower part of the 30S subunit head. Binds mRNA in the 70S ribosome, positioning it for translation. The polypeptide is Small ribosomal subunit protein uS3 (Campylobacter hominis (strain ATCC BAA-381 / DSM 21671 / CCUG 45161 / LMG 19568 / NCTC 13146 / CH001A)).